Reading from the N-terminus, the 27-residue chain is Potassium channel toxin alpha-KTx 32.1 (27 aa).

Cystine bridges form between Cys-5–Cys-18 and Cys-12–Cys-25.

In terms of tissue distribution, expressed by the venom gland.

The protein resides in the secreted. Functionally, blocker of voltage-gated potassium channels. Inhibits voltage-gated potassium channels Kv1.2/KCNA2 (Kd=0.96 nM) and Kv1.3/KCNA3 (Kd=1.3 nM). Does not inhibit Kv1.1/KCNA1, Kv1.5/KCNA5, Kv11.1/KCNH2/ERG1, KCa1.1/KCNMA1, KCa3.1/KCNN4, NaV1.5/SCN5A, NaV1.4/SCN4A or HV1/HVCN1. Strongly inhibits the expression of the activation markers interleukin-2 receptor and CD40 ligand/CD40LG in anti-CD3-activated CD4(+) TEM lymphocytes. This Centruroides margaritatus (Central American bark Scorpion) protein is Potassium channel toxin alpha-KTx 32.1.